A 248-amino-acid polypeptide reads, in one-letter code: ATP synthase subunit a, chloroplastic (248 aa).

Transmembrane regions (helical) follow at residues 37-57, 96-116, 134-154, 200-220, and 221-241; these read AQVL…AILA, VPFI…GALL, DINT…YAGL, LVVA…MMFL, and GLFT…AYIG.

The protein belongs to the ATPase A chain family. As to quaternary structure, F-type ATPases have 2 components, CF(1) - the catalytic core - and CF(0) - the membrane proton channel. CF(1) has five subunits: alpha(3), beta(3), gamma(1), delta(1), epsilon(1). CF(0) has four main subunits: a, b, b' and c.

The protein resides in the plastid. It localises to the chloroplast thylakoid membrane. Functionally, key component of the proton channel; it plays a direct role in the translocation of protons across the membrane. The sequence is that of ATP synthase subunit a, chloroplastic from Anthoceros angustus (Hornwort).